The chain runs to 430 residues: Cell wall protein ECM33 (430 aa).

A signal peptide spans 1-19 (MQFKNALTATAILSASALA). Residues Asn-22, Asn-57, Asn-83, Asn-197, Asn-210, Asn-228, Asn-235, Asn-242, Asn-268, Asn-280, Asn-305, and Asn-329 are each glycosylated (N-linked (GlcNAc...) asparagine). Position 340 is a phosphoserine (Ser-340). Low complexity predominate over residues 362–402 (LSSTSTESSKSSATSSASSSGDASNAQASVSASASSSSSSS). A disordered region spans residues 362 to 411 (LSSTSTESSKSSATSSASSSGDASNAQASVSASASSSSSSSKKSKGAAPE). A lipid anchor (GPI-anchor amidated glycine) is attached at Gly-407. A propeptide spans 408-430 (AAPELVPATSFMGVVAAVAVALL) (removed in mature form).

It belongs to the SPS2 family. The GPI-anchor is attached to the protein in the endoplasmic reticulum and serves to target the protein to the cell surface. There, the glucosamine-inositol phospholipid moiety is cleaved off and the GPI-modified mannoprotein is covalently attached via its lipidless GPI glycan remnant to the 1,6-beta-glucan of the outer cell wall layer.

It is found in the cell membrane. The protein resides in the secreted. The protein localises to the cell wall. In terms of biological role, required for proper cell wall integrity and for the correct assembly of the mannoprotein outer layer of the cell wall. Important for apical bud growth. The protein is Cell wall protein ECM33 (ECM33) of Saccharomyces cerevisiae (strain JAY291) (Baker's yeast).